The following is a 349-amino-acid chain: Phosphate acyltransferase (349 aa).

Belongs to the PlsX family. As to quaternary structure, homodimer. Probably interacts with PlsY.

The protein resides in the cytoplasm. The enzyme catalyses a fatty acyl-[ACP] + phosphate = an acyl phosphate + holo-[ACP]. Its pathway is lipid metabolism; phospholipid metabolism. Functionally, catalyzes the reversible formation of acyl-phosphate (acyl-PO(4)) from acyl-[acyl-carrier-protein] (acyl-ACP). This enzyme utilizes acyl-ACP as fatty acyl donor, but not acyl-CoA. The polypeptide is Phosphate acyltransferase (Rhodospirillum rubrum (strain ATCC 11170 / ATH 1.1.1 / DSM 467 / LMG 4362 / NCIMB 8255 / S1)).